Consider the following 384-residue polypeptide: Secreted LysM effector LysM14 (384 aa).

The signal sequence occupies residues 1-35 (MGWSPRWKVMLRGIFNAMISIHILLSLLFAHIATA). Residues 64–112 (YTYTIQEGDTCAKLAQRYQVTTSNIETWNVGSWGWPGCAKIKQGDFVCL) form the LysM domain. Positions 185 to 220 (STTKSAASKTTTTSNPTTTSKTTITSKPTTTSKPTT) are disordered.

Belongs to the secreted LysM effector family.

The protein resides in the secreted. Its function is as follows. Secreted LysM effector that might have a role in sequestration of chitin oligosaccharides (breakdown products of fungal cell walls that are released during invasion and act as triggers of host immunity) to dampen host defense. The sequence is that of Secreted LysM effector LysM14 from Penicillium expansum (Blue mold rot fungus).